We begin with the raw amino-acid sequence, 525 residues long: Serine/threonine-protein kinase YPK3 (525 aa).

Phosphoserine occurs at positions 90 and 105. Residue threonine 107 is modified to Phosphothreonine. In terms of domain architecture, Protein kinase spans 128 to 424 (FKPVRVLGQG…KTGANNKPTK (297 aa)). ATP-binding positions include 134 to 142 (LGQGAYGKV) and lysine 157. Residues 170–193 (ATDSKREDEDKNDGNNNDNDDGLS) form a disordered region. Basic and acidic residues predominate over residues 172–182 (DSKREDEDKND). The active-site Proton acceptor is aspartate 277. Serine 321 bears the Phosphoserine; by PKH1 or PKH2 mark. The AGC-kinase C-terminal domain occupies 445–524 (RKIDWKLLES…KASGSYLEKY (80 aa)). Residue threonine 490 is modified to Phosphothreonine; by TORC1. Serine 513 carries the post-translational modification Phosphoserine; by TORC1.

This sequence belongs to the protein kinase superfamily. AGC Ser/Thr protein kinase family. S6 kinase subfamily. In terms of processing, phosphorylated by PKA in a TORC1-dependent manner. Phosphorylation at PKA consensus sites RRxS/T decreases upon rapamycin treatment.

The protein resides in the cytoplasm. The catalysed reaction is L-seryl-[protein] + ATP = O-phospho-L-seryl-[protein] + ADP + H(+). The enzyme catalyses L-threonyl-[protein] + ATP = O-phospho-L-threonyl-[protein] + ADP + H(+). Functionally, AGC kinase which plays a role in TOR complex 1 (TORC1) signaling pathway which mediates temporal control of cell growth in response to nutrients. Required for phosphorylation of ribosomal protein S6 (RPS6A/RPS6B) at 'Ser-232' and 'Ser-233'. The sequence is that of Serine/threonine-protein kinase YPK3 from Saccharomyces cerevisiae (strain ATCC 204508 / S288c) (Baker's yeast).